We begin with the raw amino-acid sequence, 145 residues long: 6-pyruvoyl tetrahydrobiopterin synthase (145 aa).

S19 carries the phosphoserine; by PKG modification. H24 serves as a coordination point for Zn(2+). A Phosphoserine modification is found at S28. C43 (proton acceptor) is an active-site residue. Positions 49 and 51 each coordinate Zn(2+). Catalysis depends on H90, which acts as the Charge relay system. At Y128 the chain carries Phosphotyrosine. Residue E134 is the Charge relay system of the active site.

This sequence belongs to the PTPS family. In terms of assembly, homohexamer formed of two homotrimers in a head to head fashion. Zn(2+) is required as a cofactor. Phosphorylation of Ser-19 is required for maximal enzyme activity.

It carries out the reaction 7,8-dihydroneopterin 3'-triphosphate = 6-pyruvoyl-5,6,7,8-tetrahydropterin + triphosphate + H(+). It functions in the pathway cofactor biosynthesis; tetrahydrobiopterin biosynthesis; tetrahydrobiopterin from 7,8-dihydroneopterin triphosphate: step 1/3. Its function is as follows. Involved in the biosynthesis of tetrahydrobiopterin, an essential cofactor of aromatic amino acid hydroxylases. Catalyzes the transformation of 7,8-dihydroneopterin triphosphate into 6-pyruvoyl tetrahydropterin. This is 6-pyruvoyl tetrahydrobiopterin synthase (PTS) from Homo sapiens (Human).